The primary structure comprises 93 residues: Small ribosomal subunit protein uS19c (93 aa).

It belongs to the universal ribosomal protein uS19 family.

Its subcellular location is the plastid. The protein resides in the chloroplast. Functionally, protein S19 forms a complex with S13 that binds strongly to the 16S ribosomal RNA. The sequence is that of Small ribosomal subunit protein uS19c from Zygnema circumcarinatum (Green alga).